A 526-amino-acid polypeptide reads, in one-letter code: Fluoride export protein 1 (526 aa).

2 disordered regions span residues 1-73 and 90-149; these read MMTA…RRAS and ASNI…KQAG. Residues 1 to 159 are Cytoplasmic-facing; it reads MMTAPSDTEG…VVAKRQKVSR (159 aa). 2 stretches are compositionally biased toward basic and acidic residues: residues 21 to 36 and 103 to 123; these read SPDR…DHNH and PITR…YLRE. A helical membrane pass occupies residues 160–180; the sequence is LATELYTISYLIFFSLLGTLA. The Extracellular segment spans residues 181–194; the sequence is RLGLQALTSAYPQS. The helical transmembrane segment at 195-215 threads the bilayer; it reads PIIFPSIWPNFAGCVVMGFLA. At 216–260 the chain is on the cytoplasmic side; sequence EDRMLFRPDWGQQQPNPKKDDDDDEEAKDIDPAAAKKAHMALKKT. The tract at residues 223 to 242 is disordered; it reads PDWGQQQPNPKKDDDDDEEA. Residues 261-281 traverse the membrane as a helical segment; sequence IPLYVGLATGFCGSFTSFSSF. Topologically, residues 282–310 are extracellular; that stretch reads IRDIYLALSNDLAAHGSSAAPVSRNGGYS. The chain crosses the membrane as a helical span at residues 311 to 331; it reads FMALLAVTITTISLSLSGLFA. Residues 332 to 361 lie on the Cytoplasmic side of the membrane; that stretch reads GAHLAIAIATLFTRFDLGLPYTFVSRILDR. A helical transmembrane segment spans residues 362-382; sequence LIVLLGFGCWLGAVLLSIWPP. Residues 383 to 398 are Extracellular-facing; that stretch reads DRHSAQPEKERWRGTA. A helical membrane pass occupies residues 399–419; sequence TFALVFAPLGCLTRFYASAHL. Topologically, residues 420-424 are cytoplasmic; it reads NGRLP. A helical transmembrane segment spans residues 425–445; the sequence is SFPLGTFVVNMLGTAVLGMAW. Over 446-452 the chain is Extracellular; sequence DLNHVPS. Residues 453-473 traverse the membrane as a helical segment; the sequence is LGGVVGCQVLQGVADGFCGCL. At 474 to 492 the chain is on the cytoplasmic side; sequence TTVSTWVSELAALRRRHAY. The helical transmembrane segment at 493–513 threads the bilayer; that stretch reads VYGGASVGGGLALMVVVMGSL. Topologically, residues 514–526 are extracellular; it reads RWTEGFGEVKCIS.

It belongs to the fluoride channel Fluc/FEX (TC 1.A.43) family.

The protein resides in the cell membrane. The enzyme catalyses fluoride(in) = fluoride(out). Fluoride channel required for the rapid expulsion of cytoplasmic fluoride. The sequence is that of Fluoride export protein 1 from Neurospora crassa (strain ATCC 24698 / 74-OR23-1A / CBS 708.71 / DSM 1257 / FGSC 987).